The primary structure comprises 439 residues: Proline--tRNA ligase (439 aa).

This sequence belongs to the class-II aminoacyl-tRNA synthetase family. ProS type 2 subfamily. In terms of assembly, homodimer.

The protein resides in the cytoplasm. The enzyme catalyses tRNA(Pro) + L-proline + ATP = L-prolyl-tRNA(Pro) + AMP + diphosphate. Catalyzes the attachment of proline to tRNA(Pro) in a two-step reaction: proline is first activated by ATP to form Pro-AMP and then transferred to the acceptor end of tRNA(Pro). This Parvibaculum lavamentivorans (strain DS-1 / DSM 13023 / NCIMB 13966) protein is Proline--tRNA ligase.